The following is a 169-amino-acid chain: Lipoprotein signal peptidase (169 aa).

The next 2 helical transmembrane spans lie at 56 to 76 and 84 to 104; these read FLPPGVLLILTTIIVSGVIIY and QPLFLGSFGLIAGGGIGNLID. Active-site residues include Asp113 and Asp139. Residues 132–152 traverse the membrane as a helical segment; that stretch reads WPIFNIADSAITIGACMLIIF.

The protein belongs to the peptidase A8 family.

It localises to the cell inner membrane. The catalysed reaction is Release of signal peptides from bacterial membrane prolipoproteins. Hydrolyzes -Xaa-Yaa-Zaa-|-(S,diacylglyceryl)Cys-, in which Xaa is hydrophobic (preferably Leu), and Yaa (Ala or Ser) and Zaa (Gly or Ala) have small, neutral side chains.. The protein operates within protein modification; lipoprotein biosynthesis (signal peptide cleavage). This protein specifically catalyzes the removal of signal peptides from prolipoproteins. The sequence is that of Lipoprotein signal peptidase from Chlorobium phaeovibrioides (strain DSM 265 / 1930) (Prosthecochloris vibrioformis (strain DSM 265)).